We begin with the raw amino-acid sequence, 172 residues long: MVDKRESYTKEDLLASSRGELFGAKGPQLPAPNMLMMDRVVKMTETGGNFDKGYVEAELDINPDLWFFGCHFIGDPVMPGCLGLDAMWQLVGFYLGWLGGEGKGRALGVGEVKFTGQVLPTARKVTYRIHFKRIVNRRLIMGLADGEVLVDGRLIYTAHDLKVGLFQDTSAF.

The active site involves histidine 71.

The protein belongs to the thioester dehydratase family. FabA subfamily. Homodimer.

The protein localises to the cytoplasm. The enzyme catalyses a (3R)-hydroxyacyl-[ACP] = a (2E)-enoyl-[ACP] + H2O. It carries out the reaction (3R)-hydroxydecanoyl-[ACP] = (2E)-decenoyl-[ACP] + H2O. It catalyses the reaction (2E)-decenoyl-[ACP] = (3Z)-decenoyl-[ACP]. The protein operates within lipid metabolism; fatty acid biosynthesis. In terms of biological role, necessary for the introduction of cis unsaturation into fatty acids. Catalyzes the dehydration of (3R)-3-hydroxydecanoyl-ACP to E-(2)-decenoyl-ACP and then its isomerization to Z-(3)-decenoyl-ACP. Can catalyze the dehydratase reaction for beta-hydroxyacyl-ACPs with saturated chain lengths up to 16:0, being most active on intermediate chain length. This chain is 3-hydroxydecanoyl-[acyl-carrier-protein] dehydratase, found in Salmonella choleraesuis (strain SC-B67).